An 80-amino-acid polypeptide reads, in one-letter code: uncharacterized protein (80 aa).

A helical transmembrane segment spans residues Phe-10 to Leu-29.

It is found in the membrane. This is an uncharacterized protein from Saccharomyces cerevisiae (strain ATCC 204508 / S288c) (Baker's yeast).